The chain runs to 117 residues: MPWALLLLTLLTHSAVSVVQAGLTQPPSVSKGLRQTATLTCTGNSNIVGNQGAAWLQQHQGHPPKLLSYRNNNRPSGISERFSASRSGNTASLTITGLQPEDEADYYCSALDSSLSA.

Positions 1–21 (MPWALLLLTLLTHSAVSVVQA) are cleaved as a signal peptide. The segment at 20–43 (QAGLTQPPSVSKGLRQTATLTCTG) is framework-1. Residues 22–117 (GLTQPPSVSK…CSALDSSLSA (96 aa)) form the Ig-like domain. C41 and C108 form a disulfide bridge. The interval 44–52 (NSNIVGNQG) is complementarity-determining-1. A framework-2 region spans residues 53–69 (AAWLQQHQGHPPKLLSY). The tract at residues 70 to 72 (RNN) is complementarity-determining-2. The segment at 73 to 108 (NRPSGISERFSASRSGNTASLTITGLQPEDEADYYC) is framework-3. The segment at 109-117 (SALDSSLSA) is complementarity-determining-3.

As to quaternary structure, immunoglobulins are composed of two identical heavy chains and two identical light chains; disulfide-linked.

Its subcellular location is the secreted. It localises to the cell membrane. Functionally, v region of the variable domain of immunoglobulin light chains that participates in the antigen recognition. Immunoglobulins, also known as antibodies, are membrane-bound or secreted glycoproteins produced by B lymphocytes. In the recognition phase of humoral immunity, the membrane-bound immunoglobulins serve as receptors which, upon binding of a specific antigen, trigger the clonal expansion and differentiation of B lymphocytes into immunoglobulins-secreting plasma cells. Secreted immunoglobulins mediate the effector phase of humoral immunity, which results in the elimination of bound antigens. The antigen binding site is formed by the variable domain of one heavy chain, together with that of its associated light chain. Thus, each immunoglobulin has two antigen binding sites with remarkable affinity for a particular antigen. The variable domains are assembled by a process called V-(D)-J rearrangement and can then be subjected to somatic hypermutations which, after exposure to antigen and selection, allow affinity maturation for a particular antigen. The sequence is that of Immunoglobulin lambda variable 10-54 from Homo sapiens (Human).